We begin with the raw amino-acid sequence, 445 residues long: Phosphoglucosamine mutase (445 aa).

Serine 102 acts as the Phosphoserine intermediate in catalysis. Serine 102, aspartate 241, aspartate 243, and aspartate 245 together coordinate Mg(2+). At serine 102 the chain carries Phosphoserine.

The protein belongs to the phosphohexose mutase family. Requires Mg(2+) as cofactor. Activated by phosphorylation.

The catalysed reaction is alpha-D-glucosamine 1-phosphate = D-glucosamine 6-phosphate. Catalyzes the conversion of glucosamine-6-phosphate to glucosamine-1-phosphate. This is Phosphoglucosamine mutase from Enterobacter sp. (strain 638).